The following is a 273-amino-acid chain: Protein FAM210A (273 aa).

Residues 95–116 form a disordered region; that stretch reads VLSSSSTSQETPSEKKEEPDPL. Basic and acidic residues predominate over residues 106-116; sequence PSEKKEEPDPL. A DUF1279 domain is found at 118-230; it reads DKSISLYQRF…GYMSTPPPVK (113 aa). Residues 138 to 158 traverse the membrane as a helical segment; sequence LIPVHLITSGIWFGTFYYASI. The stretch at 233–272 forms a coiled coil; the sequence is LQGRMEETKELISEKMEETKDRLTEKLQETKEKVSFKKKV. The tract at residues 247–273 is disordered; that stretch reads KMEETKDRLTEKLQETKEKVSFKKKVE.

Belongs to the FAM210 family. Interacts with ATAD3A.

Its subcellular location is the membrane. It localises to the mitochondrion. It is found in the cytoplasm. Functionally, may play a role in the structure and strength of both muscle and bone. The chain is Protein FAM210A (Fam210a) from Rattus norvegicus (Rat).